Consider the following 449-residue polypeptide: MSATPSTLVWAAAADPDLHAFADDPFWLILLKAVAVFAFLLLMTLFAIVFERKVVAKMQQRVGPNRHGPRGWLQSLADGAKLMLKEDLIPVLADKPIFILAPIVSAVPAFLAFAVIPFGPEVSIFGERTTLQLADLPVSVLYLLAAASLGVYGLILSGWSSGSTYPLLGSLRSAAQIISYEVAMGLAFVAVFIYAGTLSTSGIVAGQSGRWYIVLVPSFVLYCISMVGETNRTPFDLPEAEGELVGGFHTEYSSIKFAFFFLAEYINMVTVSAIATTLFLGGWQPPPIPGLSGLNSGWVPLIWFVLKLLAFLFFFIWLRGTLPRLRYDQFMSFGWKVLIPVGLVWVLAVATFRVYQKHVDDRTPWLVGFGVVVGILLIVALIDPGGARHQRELEEAEQRKLAEAPSLDRIPWPPPPQAAGRGRPAVSAGASANGSSTVIPADPGPRQER.

9 helical membrane-spanning segments follow: residues 29–49 (ILLK…FAIV), 96–116 (PIFI…FAVI), 136–156 (LPVS…GLIL), 177–197 (IISY…YAGT), 211–231 (WYIV…GETN), 259–279 (FFFL…TTLF), 298–318 (WVPL…FIWL), 330–350 (FMSF…LAVA), and 365–385 (WLVG…IDPG). The segment covering 393–402 (LEEAEQRKLA) has biased composition (basic and acidic residues). The disordered stretch occupies residues 393–449 (LEEAEQRKLAEAPSLDRIPWPPPPQAAGRGRPAVSAGASANGSSTVIPADPGPRQER). Residues 418–436 (AAGRGRPAVSAGASANGSS) are compositionally biased toward low complexity.

It belongs to the complex I subunit 1 family. In terms of assembly, NDH-1 is composed of 14 different subunits. Subunits NuoA, H, J, K, L, M, N constitute the membrane sector of the complex.

The protein resides in the cell membrane. The catalysed reaction is a quinone + NADH + 5 H(+)(in) = a quinol + NAD(+) + 4 H(+)(out). NDH-1 shuttles electrons from NADH, via FMN and iron-sulfur (Fe-S) centers, to quinones in the respiratory chain. The immediate electron acceptor for the enzyme in this species is believed to be ubiquinone. Couples the redox reaction to proton translocation (for every two electrons transferred, four hydrogen ions are translocated across the cytoplasmic membrane), and thus conserves the redox energy in a proton gradient. This subunit may bind ubiquinone. The polypeptide is NADH-quinone oxidoreductase subunit H (Frankia casuarinae (strain DSM 45818 / CECT 9043 / HFP020203 / CcI3)).